A 123-amino-acid chain; its full sequence is Immunoglobulin heavy variable 4-34 (123 aa).

The signal sequence occupies residues 1 to 26 (MDLLHKNMKHLWFFLLLVAAPRWVLS). The interval 26-123 (SQVQLQQWGA…ADTAVYYCAR (98 aa)) is v region. The tract at residues 27-51 (QVQLQQWGAGLLKPSETLSLTCAVY) is framework-1. In terms of domain architecture, Ig-like spans 27-123 (QVQLQQWGAG…ADTAVYYCAR (97 aa)). C48 and C121 are joined by a disulfide. Residues 52-59 (GGSFSGYY) are complementarity-determining-1. The framework-2 stretch occupies residues 60–76 (WSWIRQPPGKGLEWIGE). The tract at residues 77–83 (INHSGST) is complementarity-determining-2. N78 is a glycosylation site (N-linked (GlcNAc...) asparagine). Positions 84 to 121 (NYNPSLKSRVTISVDTSKNQFSLKLSSVTAADTAVYYC) are framework-3. The segment at 122–123 (AR) is complementarity-determining-3.

Immunoglobulins are composed of two identical heavy chains and two identical light chains; disulfide-linked.

The protein localises to the secreted. The protein resides in the cell membrane. Functionally, v region of the variable domain of immunoglobulin heavy chains that participates in the antigen recognition. Immunoglobulins, also known as antibodies, are membrane-bound or secreted glycoproteins produced by B lymphocytes. In the recognition phase of humoral immunity, the membrane-bound immunoglobulins serve as receptors which, upon binding of a specific antigen, trigger the clonal expansion and differentiation of B lymphocytes into immunoglobulins-secreting plasma cells. Secreted immunoglobulins mediate the effector phase of humoral immunity, which results in the elimination of bound antigens. The antigen binding site is formed by the variable domain of one heavy chain, together with that of its associated light chain. Thus, each immunoglobulin has two antigen binding sites with remarkable affinity for a particular antigen. The variable domains are assembled by a process called V-(D)-J rearrangement and can then be subjected to somatic hypermutations which, after exposure to antigen and selection, allow affinity maturation for a particular antigen. This Homo sapiens (Human) protein is Immunoglobulin heavy variable 4-34.